The primary structure comprises 189 residues: Elongation factor P (189 aa).

It belongs to the elongation factor P family.

The protein resides in the cytoplasm. It functions in the pathway protein biosynthesis; polypeptide chain elongation. Its function is as follows. Involved in peptide bond synthesis. Stimulates efficient translation and peptide-bond synthesis on native or reconstituted 70S ribosomes in vitro. Probably functions indirectly by altering the affinity of the ribosome for aminoacyl-tRNA, thus increasing their reactivity as acceptors for peptidyl transferase. In Campylobacter jejuni subsp. doylei (strain ATCC BAA-1458 / RM4099 / 269.97), this protein is Elongation factor P.